The chain runs to 566 residues: Type 3 secretion system secretin (566 aa).

The N-terminal stretch at 1–22 (MKKFNIKSLTLLIVLLPLIVNA) is a signal peptide.

This sequence belongs to the bacterial secretin family. T3SS SctC subfamily. The core secretion machinery of the T3SS is composed of approximately 20 different proteins, including cytoplasmic components, a base, an export apparatus and a needle. This subunit is part of the base, which anchors the injectisome in the bacterial cell envelope. Forms a stable homooligomeric complex.

The protein resides in the cell outer membrane. Functionally, component of the type III secretion system (T3SS), also called injectisome, which is used to inject bacterial effector proteins into eukaryotic host cells. Forms a ring-shaped multimeric structure with an apparent central pore in the outer membrane. This Shigella sonnei protein is Type 3 secretion system secretin.